The sequence spans 103 residues: UPF0145 protein PTH_2690 (103 aa).

This sequence belongs to the UPF0145 family.

The protein is UPF0145 protein PTH_2690 of Pelotomaculum thermopropionicum (strain DSM 13744 / JCM 10971 / SI).